The sequence spans 202 residues: Small ribosomal subunit protein uS4 (202 aa).

One can recognise an S4 RNA-binding domain in the interval 91–168 (SRLSSVLYNS…QKVPDYLEVD (78 aa)).

It belongs to the universal ribosomal protein uS4 family. As to quaternary structure, part of the 30S ribosomal subunit. Contacts protein S5. The interaction surface between S4 and S5 is involved in control of translational fidelity.

Its function is as follows. One of the primary rRNA binding proteins, it binds directly to 16S rRNA where it nucleates assembly of the body of the 30S subunit. Functionally, with S5 and S12 plays an important role in translational accuracy. This Ehrlichia chaffeensis (strain ATCC CRL-10679 / Arkansas) protein is Small ribosomal subunit protein uS4.